Here is a 300-residue protein sequence, read N- to C-terminus: HTH-type transcriptional regulator ArgP (300 aa).

The 57-residue stretch at 4–60 (PDYRTLQALDAVIRERGFERAAQKLCITQSAVSQRIKQLENLFGQPLLVRTVPPRPT) folds into the HTH lysR-type domain. The H-T-H motif DNA-binding region spans 21-40 (FERAAQKLCITQSAVSQRIK).

It belongs to the LysR transcriptional regulatory family. As to quaternary structure, homodimer.

Controls the transcription of genes involved in arginine and lysine metabolism. In Photorhabdus laumondii subsp. laumondii (strain DSM 15139 / CIP 105565 / TT01) (Photorhabdus luminescens subsp. laumondii), this protein is HTH-type transcriptional regulator ArgP.